A 105-amino-acid polypeptide reads, in one-letter code: MKIHEQNKIRIKLQAYNHTLLDMSCKTIIDTAHRTKVQAKGPITLPAKRKIYCILRSPHVDKDSREHFEIRSYKKIIDIYEPSSQTIDSLMKLNIPSGVDIEIKL.

It belongs to the universal ribosomal protein uS10 family. Part of the 30S ribosomal subunit.

The protein resides in the plastid. The protein localises to the chloroplast. Its function is as follows. Involved in the binding of tRNA to the ribosomes. The protein is Small ribosomal subunit protein uS10c of Gracilaria tenuistipitata var. liui (Red alga).